The chain runs to 251 residues: Segregation and condensation protein A (251 aa).

The protein belongs to the ScpA family. Component of a cohesin-like complex composed of ScpA, ScpB and the Smc homodimer, in which ScpA and ScpB bind to the head domain of Smc. The presence of the three proteins is required for the association of the complex with DNA.

Its subcellular location is the cytoplasm. In terms of biological role, participates in chromosomal partition during cell division. May act via the formation of a condensin-like complex containing Smc and ScpB that pull DNA away from mid-cell into both cell halves. In Bacillus velezensis (strain DSM 23117 / BGSC 10A6 / LMG 26770 / FZB42) (Bacillus amyloliquefaciens subsp. plantarum), this protein is Segregation and condensation protein A.